Reading from the N-terminus, the 298-residue chain is uncharacterized protein (298 aa).

A run of 10 helical transmembrane segments spans residues 9 to 28 (GYVL…LYFK), 38 to 60 (IIVQ…WKHP), 72 to 94 (RFVV…VWAV), 104 to 121 (LGYY…MLLL), 128 to 145 (LQWL…QQVW), 150 to 167 (LPWV…YGLI), 174 to 196 (AALP…WLLF), 211 to 233 (PEAL…FNAA), 240 to 262 (ATLG…LLFG), and 272 to 291 (AFAF…WRSL). Residues 18–141 (VIWGLFPLYF…AVALASLGVA (124 aa)) enclose the EamA domain.

The protein belongs to the EamA transporter family.

Its subcellular location is the cell membrane. This is an uncharacterized protein from Pseudomonas aeruginosa (strain ATCC 15692 / DSM 22644 / CIP 104116 / JCM 14847 / LMG 12228 / 1C / PRS 101 / PAO1).